The sequence spans 358 residues: DNA polymerase IV (358 aa).

One can recognise a UmuC domain in the interval 4 to 185; it reads IIHIDMDCYF…LSLRKIPGVG (182 aa). 2 residues coordinate Mg(2+): Asp-8 and Asp-103. Glu-104 is a catalytic residue.

Belongs to the DNA polymerase type-Y family. In terms of assembly, monomer. Mg(2+) serves as cofactor.

It is found in the cytoplasm. It carries out the reaction DNA(n) + a 2'-deoxyribonucleoside 5'-triphosphate = DNA(n+1) + diphosphate. Poorly processive, error-prone DNA polymerase involved in untargeted mutagenesis. Copies undamaged DNA at stalled replication forks, which arise in vivo from mismatched or misaligned primer ends. These misaligned primers can be extended by PolIV. Exhibits no 3'-5' exonuclease (proofreading) activity. May be involved in translesional synthesis, in conjunction with the beta clamp from PolIII. The polypeptide is DNA polymerase IV (Shewanella baltica (strain OS195)).